The sequence spans 199 residues: Peroxynitrite isomerase (199 aa).

A GXWXGXG motif is present at residues 20 to 26; the sequence is GVWEGSG. Heme b-binding residues include K158 and H190.

The protein belongs to the nitrobindin family. Homodimer. Heme b serves as cofactor.

The enzyme catalyses peroxynitrite = nitrate. Its pathway is nitrogen metabolism. Heme-binding protein able to scavenge peroxynitrite and to protect free L-tyrosine against peroxynitrite-mediated nitration, by acting as a peroxynitrite isomerase that converts peroxynitrite to nitrate. Therefore, this protein likely plays a role in peroxynitrite sensing and in the detoxification of reactive nitrogen and oxygen species (RNS and ROS, respectively). Is able to bind nitric oxide (NO) in vitro, but may act as a sensor of peroxynitrite levels in vivo. The polypeptide is Peroxynitrite isomerase (Clavibacter sepedonicus (Clavibacter michiganensis subsp. sepedonicus)).